The primary structure comprises 343 residues: NADH dehydrogenase [ubiquinone] 1 alpha subcomplex subunit 10, mitochondrial (343 aa).

The transit peptide at 1-23 (MALRLLRLVPPRVGGIHTSVQFK) directs the protein to the mitochondrion. Position 110 is an N6-acetyllysine; alternate (Lys-110). Lys-110 bears the N6-succinyllysine; alternate mark. Position 238 is a phosphoserine; by PINK1 (Ser-238).

The protein belongs to the complex I NDUFA10 subunit family. Complex I is composed of 45 different subunits. This a component of the hydrophobic protein fraction. Requires FAD as cofactor. Phosphorylation at Ser-238 by PINK1 is required for the binding and/or reduction of the complex I substrate ubiquinone.

It localises to the mitochondrion matrix. Functionally, accessory subunit of the mitochondrial membrane respiratory chain NADH dehydrogenase (Complex I), that is believed not to be involved in catalysis. Complex I functions in the transfer of electrons from NADH to the respiratory chain. The immediate electron acceptor for the enzyme is believed to be ubiquinone. This Bos taurus (Bovine) protein is NADH dehydrogenase [ubiquinone] 1 alpha subcomplex subunit 10, mitochondrial (NDUFA10).